An 82-amino-acid chain; its full sequence is Probable [Fe-S]-dependent transcriptional repressor (82 aa).

Residues cysteine 56, cysteine 61, cysteine 64, and cysteine 71 each coordinate iron-sulfur cluster.

It belongs to the FeoC family.

In terms of biological role, may function as a transcriptional regulator that controls feoABC expression. This chain is Probable [Fe-S]-dependent transcriptional repressor, found in Yersinia enterocolitica serotype O:8 / biotype 1B (strain NCTC 13174 / 8081).